We begin with the raw amino-acid sequence, 183 residues long: Helofensin-1 (183 aa).

An N-terminal signal peptide occupies residues 1–26; it reads MQMDWLFIAVVSAIGLLSSGVPGTQG. The stretch at 27 to 64 is one C(6)C(4)C(9)C(6)CC 1; approximate repeat; that stretch reads AYTTEQCRALNGTCRFYACFPKNVVIGKCDWLGWGCCA. A C(6)C(4)C(9)C(6)CC 2; approximate repeat occupies 65–101; sequence RTPLERCTAKKGTCTASGCTETDTDHGPCDGGAQCCQ. Residues 102 to 139 form a C(6)C(4)C(9)C(6)CC 3; approximate repeat; sequence RDPVKYCKFHGNVCGRGKCPMDHIPIGEQCMPGYPCCK. One copy of the C(6)C(4)C(9)C(6)CC 4; approximate repeat lies at 140 to 177; it reads RDGPAYCKSKGGKCLRRCSQIVPTDIIGVCADGVPCCK.

Belongs to the beta-defensin family. Helofensin subfamily. In terms of tissue distribution, expressed by the mandibular venom gland.

The protein localises to the secreted. Lethal toxin which possesses an inhibitory effect on direct electrical stimulation of the isolated hemi-diaphragm of mice. Neither hemorrhagic nor hemolytic activities are detected. Phospholipase A2 activity, proteolytic activity and arginine esterolytic activity are absent. The chain is Helofensin-1 from Heloderma suspectum cinctum (Banded Gila monster).